A 571-amino-acid polypeptide reads, in one-letter code: Methionine--tRNA ligase (571 aa).

Positions 10–20 (PYVNAVPHLGN) match the 'HIGH' region motif. Positions 143, 146, 156, and 159 each coordinate Zn(2+). The short motif at 333–337 (KFSKS) is the 'KMSKS' region element. K336 contacts ATP.

It belongs to the class-I aminoacyl-tRNA synthetase family. MetG type 1 subfamily. The cofactor is Zn(2+).

It is found in the cytoplasm. The enzyme catalyses tRNA(Met) + L-methionine + ATP = L-methionyl-tRNA(Met) + AMP + diphosphate. Is required not only for elongation of protein synthesis but also for the initiation of all mRNA translation through initiator tRNA(fMet) aminoacylation. The chain is Methionine--tRNA ligase from Sulfurisphaera tokodaii (strain DSM 16993 / JCM 10545 / NBRC 100140 / 7) (Sulfolobus tokodaii).